A 178-amino-acid chain; its full sequence is Cytochrome b6-f complex iron-sulfur subunit (178 aa).

The chain crosses the membrane as a helical span at residues 20-42 (LLTFGTATGVALGALYPVANYFM). Residues 65–161 (KTGWLASHQA…VDVDDDAVLV (97 aa)) enclose the Rieske domain. 4 residues coordinate [2Fe-2S] cluster: Cys107, His109, Cys125, and His128. Cys112 and Cys127 are joined by a disulfide.

The protein belongs to the Rieske iron-sulfur protein family. The 4 large subunits of the cytochrome b6-f complex are cytochrome b6, subunit IV (17 kDa polypeptide, PetD), cytochrome f and the Rieske protein, while the 4 small subunits are PetG, PetL, PetM and PetN. The complex functions as a dimer. It depends on [2Fe-2S] cluster as a cofactor.

The protein resides in the cellular thylakoid membrane. The catalysed reaction is 2 oxidized [plastocyanin] + a plastoquinol + 2 H(+)(in) = 2 reduced [plastocyanin] + a plastoquinone + 4 H(+)(out). Functionally, component of the cytochrome b6-f complex, which mediates electron transfer between photosystem II (PSII) and photosystem I (PSI), cyclic electron flow around PSI, and state transitions. This Prochlorococcus marinus subsp. pastoris (strain CCMP1986 / NIES-2087 / MED4) protein is Cytochrome b6-f complex iron-sulfur subunit.